Reading from the N-terminus, the 23-residue chain is Basic phospholipase A2 CB2 (23 aa).

Requires Ca(2+) as cofactor. Post-translationally, contains 7 disulfide bonds. In terms of tissue distribution, expressed by the venom gland.

The protein localises to the secreted. It carries out the reaction a 1,2-diacyl-sn-glycero-3-phosphocholine + H2O = a 1-acyl-sn-glycero-3-phosphocholine + a fatty acid + H(+). Its function is as follows. Snake venom phospholipase A2 (PLA2) that shows presynaptic neurotoxicity. PLA2 catalyzes the calcium-dependent hydrolysis of the 2-acyl groups in 3-sn-phosphoglycerides. The protein is Basic phospholipase A2 CB2 of Crotalus durissus cumanensis (South American rattlesnake).